Reading from the N-terminus, the 297-residue chain is HTH-type transcriptional regulator IlvY (297 aa).

One can recognise an HTH lysR-type domain in the interval 1 to 58; the sequence is MDLRDLKTFLHLAESRHFGRSARAMHVSPSTLSRQIQRLEEDLGQPLFVRDNRTVTLT. Residues 18 to 37 constitute a DNA-binding region (H-T-H motif); sequence FGRSARAMHVSPSTLSRQIQ.

It belongs to the LysR transcriptional regulatory family.

It localises to the cytoplasm. Its function is as follows. This protein activates the transcription of the ilvC gene in the presence of acetolactate or acetohydroxybutyrate. IlvY is also a negative regulator of its own expression. The protein is HTH-type transcriptional regulator IlvY (ilvY) of Escherichia coli (strain K12).